The following is a 475-amino-acid chain: Aspartyl/glutamyl-tRNA(Asn/Gln) amidotransferase subunit B (475 aa).

It belongs to the GatB/GatE family. GatB subfamily. In terms of assembly, heterotrimer of A, B and C subunits.

The catalysed reaction is L-glutamyl-tRNA(Gln) + L-glutamine + ATP + H2O = L-glutaminyl-tRNA(Gln) + L-glutamate + ADP + phosphate + H(+). It catalyses the reaction L-aspartyl-tRNA(Asn) + L-glutamine + ATP + H2O = L-asparaginyl-tRNA(Asn) + L-glutamate + ADP + phosphate + 2 H(+). In terms of biological role, allows the formation of correctly charged Asn-tRNA(Asn) or Gln-tRNA(Gln) through the transamidation of misacylated Asp-tRNA(Asn) or Glu-tRNA(Gln) in organisms which lack either or both of asparaginyl-tRNA or glutaminyl-tRNA synthetases. The reaction takes place in the presence of glutamine and ATP through an activated phospho-Asp-tRNA(Asn) or phospho-Glu-tRNA(Gln). This Bacillus thuringiensis subsp. konkukian (strain 97-27) protein is Aspartyl/glutamyl-tRNA(Asn/Gln) amidotransferase subunit B.